We begin with the raw amino-acid sequence, 463 residues long: MENVLVKQLYRLSSEFGGKKVRLSGWVRTIRASKSFGFIEINDGSFFKNIQVVFDDKLDNFKEISKFIISSTITVEGEFVLTPNAKQPFEIHAENITLEGNSDNDYPLQKKRHTLEYLRSIAHLRPRSNTFSAVFRVRSLAAYAVHKFFQERDFVYVNTPLITASDAEGAGEMFQVTTLDLKNPPKNEEGNIDFSKDFFGKKANLTVSGQLSAETFALAFRNVYTFGPTFRAEESNTTRHAAEFWMIEPEMAFAELSDYLDTAEEMVKYIINFVMENAPEEMEFFNTRIDKGLFDRLHNVVNSEFGRITYTEAVDILEKSGEKFEYPVKWGIDLQTEHERYLTDKVFKKPLFVTDYPKDIKAFYMRINDDNKTVAAADLLVPGVGEIIGGSQREERLAVLEKRMEELNLNKEDYWWYLELRKYGETKHSGYGLGFERMIMYLTGISNIRDVIPFPRTTGSAEF.

It belongs to the class-II aminoacyl-tRNA synthetase family. As to quaternary structure, homodimer.

It is found in the cytoplasm. It catalyses the reaction tRNA(Asn) + L-asparagine + ATP = L-asparaginyl-tRNA(Asn) + AMP + diphosphate + H(+). This is Asparagine--tRNA ligase from Clostridium acetobutylicum (strain ATCC 824 / DSM 792 / JCM 1419 / IAM 19013 / LMG 5710 / NBRC 13948 / NRRL B-527 / VKM B-1787 / 2291 / W).